Reading from the N-terminus, the 199-residue chain is Probable GTP-binding protein EngB (199 aa).

Residues 22–195 (QLPEIALSGR…WEWIEQQCDI (174 aa)) form the EngB-type G domain. GTP is bound by residues 30 to 37 (GRSNVGKS), 57 to 61 (GKTQT), 75 to 78 (DVPG), 142 to 145 (TKMD), and 174 to 176 (FSA). Residues Ser-37 and Thr-59 each contribute to the Mg(2+) site.

This sequence belongs to the TRAFAC class TrmE-Era-EngA-EngB-Septin-like GTPase superfamily. EngB GTPase family. Requires Mg(2+) as cofactor.

Its function is as follows. Necessary for normal cell division and for the maintenance of normal septation. The polypeptide is Probable GTP-binding protein EngB (Latilactobacillus sakei subsp. sakei (strain 23K) (Lactobacillus sakei subsp. sakei)).